Here is a 526-residue protein sequence, read N- to C-terminus: Peptide chain release factor 3 (526 aa).

A tr-type G domain is found at 9-277 (DKRRTFAIIS…GIVEWAPKPL (269 aa)). GTP contacts are provided by residues 18 to 25 (SHPDAGKT), 86 to 90 (DTPGH), and 140 to 143 (NKLD).

The protein belongs to the TRAFAC class translation factor GTPase superfamily. Classic translation factor GTPase family. PrfC subfamily.

The protein localises to the cytoplasm. In terms of biological role, increases the formation of ribosomal termination complexes and stimulates activities of RF-1 and RF-2. It binds guanine nucleotides and has strong preference for UGA stop codons. It may interact directly with the ribosome. The stimulation of RF-1 and RF-2 is significantly reduced by GTP and GDP, but not by GMP. This is Peptide chain release factor 3 from Shewanella putrefaciens (strain CN-32 / ATCC BAA-453).